A 354-amino-acid chain; its full sequence is Glucose 1-dehydrogenase (354 aa).

The tract at residues 1–27 (MKVIGVTRDDDGPQLLERERPSPDPGE) is disordered. The segment covering 7 to 22 (TRDDDGPQLLERERPS) has biased composition (basic and acidic residues). Asp38 lines the Zn(2+) pocket. Thr40 contacts substrate. Zn(2+)-binding residues include His63 and Glu64. The tract at residues 91-110 (PNGETNEYFRRGEPDMAPDG) is disordered. The substrate site is built by Glu114 and Glu150. Glu150 is a binding site for Zn(2+). NADP(+) contacts are provided by residues 181-184 (NGSL), 204-205 (RR), 269-271 (LGI), and 298-300 (TVN). Asn300 provides a ligand contact to substrate.

This sequence belongs to the zinc-containing alcohol dehydrogenase family. Glucose 1-dehydrogenase subfamily. Zn(2+) is required as a cofactor.

The catalysed reaction is D-glucose + NAD(+) = D-glucono-1,5-lactone + NADH + H(+). It carries out the reaction D-glucose + NADP(+) = D-glucono-1,5-lactone + NADPH + H(+). Catalyzes the NAD(P)(+)-dependent oxidation of D-glucose to D-gluconate via gluconolactone. Can utilize both NAD(+) and NADP(+) as electron acceptor. Is involved in the degradation of glucose through a modified Entner-Doudoroff pathway. In Haloarcula marismortui (strain ATCC 43049 / DSM 3752 / JCM 8966 / VKM B-1809) (Halobacterium marismortui), this protein is Glucose 1-dehydrogenase.